A 149-amino-acid chain; its full sequence is MAAKVEPFWIRKTLEHLDQEEWESLCDGCGLCCLQKLEDEDDNSVYYTRIACKLLDLKTCQCTDYPNRRASVPDCIQLTPGQADQFKWLPPTCGYRLVSERNDLPLWHHLVCGDRDAVHHERISQSGRMLSEGSVPEDDWEDYLIFRAG.

This sequence belongs to the UPF0260 family.

This chain is UPF0260 protein PFLU_1520, found in Pseudomonas fluorescens (strain SBW25).